The following is a 104-amino-acid chain: Nucleoid-associated protein jk2011 (104 aa).

This sequence belongs to the YbaB/EbfC family. In terms of assembly, homodimer.

The protein localises to the cytoplasm. Its subcellular location is the nucleoid. Its function is as follows. Binds to DNA and alters its conformation. May be involved in regulation of gene expression, nucleoid organization and DNA protection. The polypeptide is Nucleoid-associated protein jk2011 (Corynebacterium jeikeium (strain K411)).